A 1078-amino-acid chain; its full sequence is MTKRTFAPVPTQPNFRQLEADILQKWKDEQVFEQTQTRPAPAGEFVFYEGPPTANGKPALHHVLARSFKDLFPRFKVMQGHHVTRKGGWDTHGLPVEISVEKKLGWLGRNHGASREELEEFNRLCRTSVWETIQDWNELTERMGYWLDLGDPYITYQNSYVESVWNLLRRLHEKGLVAQDYKVVPLSPRISSTLSRAELGEVDSYRMVDDPSVYVRLPIVWDTLPERAHAALSSLSGEQRQGLSLLVWTTTPWTLPSNTLAAVNPDLDYVVADSPSGRVIVAEGAVERLSALHKDAAPLEVLARFKGRDLEWVEYEPPFPEVASQLGVVSELHERRDGKPVLHFVVMADFVSDVDGSGVAHEAPAYGAEDLEVARAYGVPLMFGVDDHGILQVTHEQGKFFKDADKGLIADMKARGLMFWAGTLKHRYPFHDRTGDPILYFAKKGWYIRTSQVAGEMLAQNEKINWVPGNIKHGRFGNWLEGNVDWAISRERYWGTPLPFWQSESGQLRVIGSVAELSELAGRDLSDLDLHRPYIDDITFTLDGEEYRRVPEVLDVWFDSGSMPYAQWGLLLNEQGEAVRGAEQFAKHYPADYICEAIDQTRGWFYSLHAISTMLYDQPAYKNVICLGHIVDEKGLKMSKSKGNVVAPLPLFDQYGADSVRWYMFMASDPGDQKRFSERLVAEAQRSYVNTLWNVYSFFVLYANLDQPDLAAAPAVAERPEMDRWLLARLEETVRDVTAALESYDARSGGRALEGFVDDLSNWYVRRSRSRFWGEGGTVDTAAYATLHEALLVVSQLTAPFTPFLADALYRNLSGEESSVHLTPWPTVRAERLDRKLTADMAAVMKVVELGRAVRGAHNLKTRQPLAGVQVRAASPEALDALKRSQTQIMEELNVKAVTFLEGDTDLVQYSLRPNLPVVGKQYGKQLPVLKKALTEADARAVATAVQAGQGFSVQADGVTFDLTPGSVLVDAKAPEGVAAAEDAGYLVAFDTALTPELVREGLARDLVRAIQEARKAAGFEVQDRIALALELDGEALEAAQAWQDFIAGEVLAEQVAYGSGEGFRAEVEGGAVTLKKL.

The 'HIGH' region signature appears at 52-62 (PTANGKPALHH). A 'KMSKS' region motif is present at residues 637-641 (KMSKS). K640 is an ATP binding site.

The protein belongs to the class-I aminoacyl-tRNA synthetase family. IleS type 2 subfamily. In terms of assembly, monomer. Requires Zn(2+) as cofactor.

It is found in the cytoplasm. It carries out the reaction tRNA(Ile) + L-isoleucine + ATP = L-isoleucyl-tRNA(Ile) + AMP + diphosphate. In terms of biological role, catalyzes the attachment of isoleucine to tRNA(Ile). As IleRS can inadvertently accommodate and process structurally similar amino acids such as valine, to avoid such errors it has two additional distinct tRNA(Ile)-dependent editing activities. One activity is designated as 'pretransfer' editing and involves the hydrolysis of activated Val-AMP. The other activity is designated 'posttransfer' editing and involves deacylation of mischarged Val-tRNA(Ile). This chain is Isoleucine--tRNA ligase, found in Deinococcus radiodurans (strain ATCC 13939 / DSM 20539 / JCM 16871 / CCUG 27074 / LMG 4051 / NBRC 15346 / NCIMB 9279 / VKM B-1422 / R1).